A 203-amino-acid chain; its full sequence is Dual-action ribosomal maturation protein DarP (203 aa).

Disordered stretches follow at residues 1 to 31 (MRPM…SKSQ) and 183 to 203 (GASD…DDEA). Over residues 186–203 (DSDDEAAGDAGDDHDDEA) the composition is skewed to acidic residues.

The protein belongs to the DarP family.

The protein resides in the cytoplasm. Functionally, member of a network of 50S ribosomal subunit biogenesis factors which assembles along the 30S-50S interface, preventing incorrect 23S rRNA structures from forming. Promotes peptidyl transferase center (PTC) maturation. The protein is Dual-action ribosomal maturation protein DarP of Burkholderia cenocepacia (strain ATCC BAA-245 / DSM 16553 / LMG 16656 / NCTC 13227 / J2315 / CF5610) (Burkholderia cepacia (strain J2315)).